The sequence spans 159 residues: Probable inactive acireductone dioxygenase 1 (159 aa).

This sequence belongs to the acireductone dioxygenase (ARD) family.

It localises to the cytoplasm. The protein localises to the nucleus. Functionally, probable inactive acireductone dioxygenase. This chain is Probable inactive acireductone dioxygenase 1, found in Caenorhabditis elegans.